Consider the following 245-residue polypeptide: 1-(5-phosphoribosyl)-5-[(5-phosphoribosylamino)methylideneamino] imidazole-4-carboxamide isomerase (245 aa).

The Proton acceptor role is filled by Asp-7. Asp-129 serves as the catalytic Proton donor.

This sequence belongs to the HisA/HisF family.

The protein localises to the cytoplasm. The catalysed reaction is 1-(5-phospho-beta-D-ribosyl)-5-[(5-phospho-beta-D-ribosylamino)methylideneamino]imidazole-4-carboxamide = 5-[(5-phospho-1-deoxy-D-ribulos-1-ylimino)methylamino]-1-(5-phospho-beta-D-ribosyl)imidazole-4-carboxamide. It participates in amino-acid biosynthesis; L-histidine biosynthesis; L-histidine from 5-phospho-alpha-D-ribose 1-diphosphate: step 4/9. This chain is 1-(5-phosphoribosyl)-5-[(5-phosphoribosylamino)methylideneamino] imidazole-4-carboxamide isomerase, found in Escherichia coli (strain SMS-3-5 / SECEC).